The sequence spans 313 residues: Glyoxylate/hydroxypyruvate reductase A HPR2 (313 aa).

NADP(+) is bound by residues 152-155 (LGRI), 174-176 (SRT), 230-232 (IGR), and D256. Residue R232 is part of the active site. E261 is a catalytic residue. H279 (proton donor) is an active-site residue. Position 279–281 (279–281 (HVG)) interacts with NADP(+).

The protein belongs to the D-isomer specific 2-hydroxyacid dehydrogenase family. GyaR subfamily. Homodimer.

It is found in the cytoplasm. It catalyses the reaction glycolate + NADP(+) = glyoxylate + NADPH + H(+). It carries out the reaction (R)-glycerate + NAD(+) = 3-hydroxypyruvate + NADH + H(+). The catalysed reaction is (R)-glycerate + NADP(+) = 3-hydroxypyruvate + NADPH + H(+). With respect to regulation, strongly inhibited by oxalate. In terms of biological role, catalyzes the NADPH-dependent reduction of glyoxylate and hydroxypyruvate (HP) into glycolate and glycerate in the cytoplasm, thus providing a cytosolic bypass to the photorespiratory core cycle. Mostly active in the presence of NADPH and hydroxypyruvate. The protein is Glyoxylate/hydroxypyruvate reductase A HPR2 (HPR2) of Arabidopsis thaliana (Mouse-ear cress).